Consider the following 136-residue polypeptide: Mini-ribonuclease 3 (136 aa).

Residue aspartate 20 is part of the active site.

The protein belongs to the MrnC RNase family. Homodimer. It depends on Mg(2+) as a cofactor.

The protein localises to the cytoplasm. Functionally, involved in correct processing of both the 5' and 3' ends of 23S rRNA precursor. Processes 30S rRNA precursor transcript even in absence of ribonuclease 3 (Rnc); Rnc processes 30S rRNA into smaller rRNA precursors. In Listeria monocytogenes serovar 1/2a (strain ATCC BAA-679 / EGD-e), this protein is Mini-ribonuclease 3.